A 432-amino-acid chain; its full sequence is C(50) beta-cyclic carotenoids biosynthesis protein LbtBC (432 aa).

Residues 1–140 (MTSLYTTLNL…DDDEVRTPER (140 aa)) form a beta-cyclase region. Helical transmembrane passes span 4-24 (LYTT…LLAA), 36-56 (LIGV…FDNI), and 83-103 (FAYA…LTAS). The segment at 111-140 (GSPTVSGRGDALLTRAPEPGDDDEVRTPER) is disordered. Residues 141–432 (PGTPGLLTTL…IVLWSVLVWS (292 aa)) form an elongase/hydratase region. A run of 7 helical transmembrane segments spans residues 170–190 (YFLA…FFLV), 252–272 (ESSL…AKGL), 277–297 (IPFL…IVGW), 299–319 (IAGA…MLWG), 350–370 (AAVW…LAAA), 374–394 (ASGA…YVGV), and 409–429 (FLVL…WSVL).

It belongs to the UbiA prenyltransferase family. May form a complex with LbtA.

It is found in the cell membrane. The enzyme catalyses all-trans-lycopene + dimethylallyl diphosphate + H2O = dihydroisopentenyldehydrorhodopin + diphosphate. It catalyses the reaction isopentenyldehydrorhodopin + dimethylallyl diphosphate + H2O = dihydrobisanhydrobacterioruberin + diphosphate. Its pathway is carotenoid biosynthesis. In terms of biological role, involved in the biosynthesis of C(50) beta-cyclic carotenoids. The elongase/hydratase domain catalyzes the elongation of lycopene by attaching a C(5) isoprene unit at C-2, as well as the hydroxylation of the previous end of the molecule. The enzyme acts at both ends of the substrate, and catalyzes the conversion of lycopene to the C(45) intermediate dihydroisopentenyldehydrorhodopin (DH-IDR) and the conversion of isopentenyldehydrorhodopin (IDR) to the C(50) carotenoid dihydrobisanhydrobacterioruberin (DH-BABR). The beta-cyclase domain may produce the C(50) beta-cyclic carotenoid C.p.450 from the C(50) carotenoid dihydrobisanhydrobacterioruberin (DH-BABR). In Dietzia sp. (strain CQ4), this protein is C(50) beta-cyclic carotenoids biosynthesis protein LbtBC.